Here is a 244-residue protein sequence, read N- to C-terminus: Reticulon-like protein B7 (244 aa).

A Reticulon domain is found at 70–244 (PADVLLWRDK…EAKFLSKIPH (175 aa)). Transmembrane regions (helical) follow at residues 80-100 (KVTL…GFGG), 103-123 (LLTS…LWSN), and 172-192 (FVMA…FSFL).

It localises to the endoplasmic reticulum membrane. In Arabidopsis thaliana (Mouse-ear cress), this protein is Reticulon-like protein B7 (RTNLB7).